Here is a 102-residue protein sequence, read N- to C-terminus: MESQNIRIRLKAFDHRVLDQSTREIVSTAKRTGAQVRGPIPLPTRIEKFTVNRSPHIDKKSREQFEIRTHKRLLDIVDPTPQTVDALMKLDLAAGVDVEIKL.

It belongs to the universal ribosomal protein uS10 family. Part of the 30S ribosomal subunit.

In terms of biological role, involved in the binding of tRNA to the ribosomes. This chain is Small ribosomal subunit protein uS10, found in Rhodospirillum rubrum (strain ATCC 11170 / ATH 1.1.1 / DSM 467 / LMG 4362 / NCIMB 8255 / S1).